We begin with the raw amino-acid sequence, 155 residues long: Large ribosomal subunit protein uL22c (155 aa).

This sequence belongs to the universal ribosomal protein uL22 family. In terms of assembly, part of the 50S ribosomal subunit.

The protein resides in the plastid. Its subcellular location is the chloroplast. In terms of biological role, this protein binds specifically to 23S rRNA. The globular domain of the protein is located near the polypeptide exit tunnel on the outside of the subunit, while an extended beta-hairpin is found that lines the wall of the exit tunnel in the center of the 70S ribosome. The protein is Large ribosomal subunit protein uL22c (rpl22) of Nicotiana tomentosiformis (Tobacco).